The primary structure comprises 474 residues: tRNA-2-methylthio-N(6)-dimethylallyladenosine synthase (474 aa).

One can recognise an MTTase N-terminal domain in the interval 3 to 120 (KKLHIKTWGC…LPEMIDQIEA (118 aa)). The [4Fe-4S] cluster site is built by C12, C49, C83, C157, C161, and C164. Positions 143–375 (RADGPSAFVS…QDRITQQAMR (233 aa)) constitute a Radical SAM core domain. The region spanning 378-441 (RQMLGTVQRI…TNSLRGNFIR (64 aa)) is the TRAM domain.

This sequence belongs to the methylthiotransferase family. MiaB subfamily. Monomer. [4Fe-4S] cluster is required as a cofactor.

It is found in the cytoplasm. The enzyme catalyses N(6)-dimethylallyladenosine(37) in tRNA + (sulfur carrier)-SH + AH2 + 2 S-adenosyl-L-methionine = 2-methylsulfanyl-N(6)-dimethylallyladenosine(37) in tRNA + (sulfur carrier)-H + 5'-deoxyadenosine + L-methionine + A + S-adenosyl-L-homocysteine + 2 H(+). In terms of biological role, catalyzes the methylthiolation of N6-(dimethylallyl)adenosine (i(6)A), leading to the formation of 2-methylthio-N6-(dimethylallyl)adenosine (ms(2)i(6)A) at position 37 in tRNAs that read codons beginning with uridine. The sequence is that of tRNA-2-methylthio-N(6)-dimethylallyladenosine synthase from Shewanella woodyi (strain ATCC 51908 / MS32).